Reading from the N-terminus, the 569-residue chain is MVLVTSVRDYINRMLQDISGMKVLILDSETVSNVSIVYSQSELLQKEVFLVEMIDSISVSKESMSHLKAVYFIRPTSDNIQKLRYQLANPRFGEYHLFFSNLLKDTQIHILADSDEQEVVQQVQEYYADFVSGDPYHFTLNMASNHLYMIPAVVDPSGLQRFSDRVVDGIAAVFLALKRRPVIRYQRTSDTAKRIAHETAKLMYQHESALFDFRRTESSPLLLVIDRRDDPVTPLLNQWTYQAMVHELIGLQDNKVDLKSIGSLPKDQQVEVVLSSEQDAFFKSNMYENFGDIGMNIKRMVDDFQQVAKSNQNIQTVEDMARFVDNYPEYKKMQGNVSKHVTLVTEMSKLVEARKLMTVSQTEQDLACNGGQGAAYEAVTDLLNNESVSDIDRLRLVMLYALRYEKENPVQLMQLFNKLASRSPKYKPGLVQFLLKQAGVEKRTGDLFGNRDLLNIARNMARGLKGVENVYTQHQPLLFQTMESITRGRLRDVDYPFVGDHFQQGRPQEVVIFMVGGTTYEESRSVALQNATNSGVRFILGGTAVLNSKRFLKDLEEAQRISRSGSHMV.

The protein belongs to the STXBP/unc-18/SEC1 family. In terms of assembly, interacts with both SYP41 or SYP42 and VTI12, but in different domains of the trans-Golgi network. Does not interact on the pervacuolar compartment with VTI11, SYP21 or SYP22, or on the cis-Golgi with SYP31. Interacts at the trans-Golgi network (TGN) with the SYP41/SYP61/VTI12 SNARE complex. As to expression, highly expressed in roots, lower expression in leaves, stems and flowers.

Its subcellular location is the golgi apparatus. It is found in the trans-Golgi network membrane. The protein localises to the early endosome. Involved in the protein transport to the vacuole, probably at the level of vesicle fusion at the trans-Golgi network (TGN) and not in transport from the TGN to the prevacuolar compartment, by promoting the recycling of vacuolar sorting receptors back to the TGN. Involved in early endosomal vesicle trafficking, particularly at the trans-Golgi-network/early endosome (TGN/EE) thus residing in early endocytic route. Together with BIG5/BEN1 required for polar PIN-FORMED (PIN) proteins localization, for their dynamic repolarization, and consequently for auxin activity gradient formation and auxin-related developmental processes (e.g. embryonic patterning, organogenesis and vasculature venation patterning). Necessary for pollen germination and for cell expansion. Binds syntaxins. The sequence is that of Vacuolar protein sorting-associated protein 45 homolog from Arabidopsis thaliana (Mouse-ear cress).